The chain runs to 175 residues: Peptide deformylase (175 aa).

The Fe cation site is built by Cys99 and His141. Residue Glu142 is part of the active site. His145 serves as a coordination point for Fe cation.

It belongs to the polypeptide deformylase family. The cofactor is Fe(2+).

The enzyme catalyses N-terminal N-formyl-L-methionyl-[peptide] + H2O = N-terminal L-methionyl-[peptide] + formate. Its function is as follows. Removes the formyl group from the N-terminal Met of newly synthesized proteins. Requires at least a dipeptide for an efficient rate of reaction. N-terminal L-methionine is a prerequisite for activity but the enzyme has broad specificity at other positions. This chain is Peptide deformylase, found in Rickettsia typhi (strain ATCC VR-144 / Wilmington).